A 404-amino-acid polypeptide reads, in one-letter code: Photosynthetic reaction center cytochrome c subunit (404 aa).

A signal peptide spans methionine 1–glycine 22. The N-palmitoyl cysteine moiety is linked to residue cysteine 23. The S-diacylglycerol cysteine moiety is linked to residue cysteine 23. Methionine 94, cysteine 107, cysteine 110, histidine 111, methionine 130, histidine 144, cysteine 152, cysteine 155, histidine 156, methionine 236, cysteine 247, cysteine 250, histidine 251, cysteine 307, cysteine 310, and histidine 311 together coordinate heme. Residues alanine 346 to leucine 404 are disordered.

As to quaternary structure, component of the photosynthetic reaction center composed of protein subunits L (PufL), M (PufM), H (PuhA) and cytochrome C (PufC). The reaction center interacts with light-harvesting antenna complex LH1. Post-translationally, binds 4 heme groups per subunit.

It is found in the cellular chromatophore membrane. In terms of biological role, the reaction center of purple bacteria contains a tightly bound cytochrome molecule which re-reduces the photo oxidized primary electron donor. This chain is Photosynthetic reaction center cytochrome c subunit, found in Thermochromatium tepidum (Chromatium tepidum).